A 40-amino-acid chain; its full sequence is Large ribosomal subunit protein bL36A (40 aa).

Belongs to the bacterial ribosomal protein bL36 family.

In Paenarthrobacter aurescens (strain TC1), this protein is Large ribosomal subunit protein bL36A.